Here is a 274-residue protein sequence, read N- to C-terminus: MSVQTTIKRKTAPDIRARKGGDPIVMLTSYHAHTASLVDRYCDVILVGDSLGNVMHGFETTIPVTLEMMILQGHAVMRGSQHALVVVDMPFGSYEASKEQAFHSAARILKETHCGAVKLEGGVRMAETIAFLTERGIPVMGHIGLTPQSINTLGSFRAQGREEGSWEPIEADARAVADAGAFSVVVEAVAEPLGRKITETIAIPTIGIGASAACDGQVLVLEDMLGLSPRTPKFVKRYGELGPGIEAAIKGYAEEVRSRAFPGPEHVYGMKAKG.

Mg(2+) is bound by residues Asp49 and Asp88. Residues 49-50, Asp88, and Lys118 each bind 3-methyl-2-oxobutanoate; that span reads DS. Glu120 is a Mg(2+) binding site. Residue Glu187 is the Proton acceptor of the active site.

The protein belongs to the PanB family. As to quaternary structure, homodecamer; pentamer of dimers. Mg(2+) serves as cofactor.

Its subcellular location is the cytoplasm. It catalyses the reaction 3-methyl-2-oxobutanoate + (6R)-5,10-methylene-5,6,7,8-tetrahydrofolate + H2O = 2-dehydropantoate + (6S)-5,6,7,8-tetrahydrofolate. The protein operates within cofactor biosynthesis; (R)-pantothenate biosynthesis; (R)-pantoate from 3-methyl-2-oxobutanoate: step 1/2. Functionally, catalyzes the reversible reaction in which hydroxymethyl group from 5,10-methylenetetrahydrofolate is transferred onto alpha-ketoisovalerate to form ketopantoate. In Rhodopseudomonas palustris (strain HaA2), this protein is 3-methyl-2-oxobutanoate hydroxymethyltransferase.